The chain runs to 553 residues: Glutamate--tRNA ligase (553 aa).

The short motif at 98-108 (PNPSGPLHIGH) is the 'HIGH' region element.

It belongs to the class-I aminoacyl-tRNA synthetase family. Glutamate--tRNA ligase type 2 subfamily.

It is found in the cytoplasm. The catalysed reaction is tRNA(Glu) + L-glutamate + ATP = L-glutamyl-tRNA(Glu) + AMP + diphosphate. Its function is as follows. Catalyzes the attachment of glutamate to tRNA(Glu) in a two-step reaction: glutamate is first activated by ATP to form Glu-AMP and then transferred to the acceptor end of tRNA(Glu). The polypeptide is Glutamate--tRNA ligase (Methanocaldococcus jannaschii (strain ATCC 43067 / DSM 2661 / JAL-1 / JCM 10045 / NBRC 100440) (Methanococcus jannaschii)).